The sequence spans 596 residues: Aspartate--tRNA(Asp/Asn) ligase (596 aa).

E172 lines the L-aspartate pocket. The tract at residues Q196–K199 is aspartate. Residue R218 participates in L-aspartate binding. Residues R218–E220 and Q227 each bind ATP. H455 contributes to the L-aspartate binding site. E489 lines the ATP pocket. R496 lines the L-aspartate pocket. G541 to R544 provides a ligand contact to ATP.

It belongs to the class-II aminoacyl-tRNA synthetase family. Type 1 subfamily. In terms of assembly, homodimer.

It localises to the cytoplasm. It carries out the reaction tRNA(Asx) + L-aspartate + ATP = L-aspartyl-tRNA(Asx) + AMP + diphosphate. Its function is as follows. Aspartyl-tRNA synthetase with relaxed tRNA specificity since it is able to aspartylate not only its cognate tRNA(Asp) but also tRNA(Asn). Reaction proceeds in two steps: L-aspartate is first activated by ATP to form Asp-AMP and then transferred to the acceptor end of tRNA(Asp/Asn). The protein is Aspartate--tRNA(Asp/Asn) ligase of Bordetella avium (strain 197N).